A 479-amino-acid chain; its full sequence is Integrin-linked protein kinase 1 (479 aa).

2 positions are modified to phosphoserine: Ser17 and Ser26. The disordered stretch occupies residues 29–73; it reads FTRQSSLDPRRTNMRFSFGRQSSLDPIRRSPDSSKSDDEPHMSVP. Over residues 54 to 69 the composition is skewed to basic and acidic residues; it reads PIRRSPDSSKSDDEPH. ANK repeat units follow at residues 77 to 106 and 110 to 139; these read DSTM…DVNS and DGRT…NIDA. Residues 194 to 461 enclose the Protein kinase domain; the sequence is LEVQVRKSDG…EIIIRLDKIV (268 aa). Residues 200 to 208 and Lys222 each bind ATP; that span reads KSDGISKGA. Asp319 acts as the Proton acceptor in catalysis.

It belongs to the protein kinase superfamily. Ser/Thr protein kinase family. Interacts with CML9 and POT5/HAK5. Post-translationally, autophosphorylated at Ser-17 and Ser-26.

The protein resides in the cell membrane. It localises to the endoplasmic reticulum membrane. It carries out the reaction L-seryl-[protein] + ATP = O-phospho-L-seryl-[protein] + ADP + H(+). It catalyses the reaction L-threonyl-[protein] + ATP = O-phospho-L-threonyl-[protein] + ADP + H(+). With respect to regulation, kinase activity is suppressed by interaction with CML9. Functionally, functions as a link between plant defense pathways, stress responses and potassium homeostasis. Promotes osmotic stress sensitivity, responses to the bacterial-derived pathogen-associated molecular pattern (PAMP) flg22, and resistance to bacterial pathogens. Promotes the accumulation of POT5/HAK5, a potassium transporter that mediates high-affinity uptake during potassium deficiency. The polypeptide is Integrin-linked protein kinase 1 (Arabidopsis thaliana (Mouse-ear cress)).